Consider the following 204-residue polypeptide: Holliday junction branch migration complex subunit RuvA (204 aa).

The tract at residues 1–64 is domain I; it reads MISRMKGIIL…EDAQLLYGFH (64 aa). The tract at residues 65 to 143 is domain II; it reads HPKERAMFSE…NLNKNLFKST (79 aa). Residues 144 to 155 are flexible linker; the sequence is ADHMLSSVSTDL. Residues 156–204 form a domain III region; that stretch reads SAKSAEAEAISALISLGYKPQEAAQLIKNIAQPDLDSQALIKHALRSTL.

This sequence belongs to the RuvA family. Homotetramer. Forms an RuvA(8)-RuvB(12)-Holliday junction (HJ) complex. HJ DNA is sandwiched between 2 RuvA tetramers; dsDNA enters through RuvA and exits via RuvB. An RuvB hexamer assembles on each DNA strand where it exits the tetramer. Each RuvB hexamer is contacted by two RuvA subunits (via domain III) on 2 adjacent RuvB subunits; this complex drives branch migration. In the full resolvosome a probable DNA-RuvA(4)-RuvB(12)-RuvC(2) complex forms which resolves the HJ.

The protein resides in the cytoplasm. Its function is as follows. The RuvA-RuvB-RuvC complex processes Holliday junction (HJ) DNA during genetic recombination and DNA repair, while the RuvA-RuvB complex plays an important role in the rescue of blocked DNA replication forks via replication fork reversal (RFR). RuvA specifically binds to HJ cruciform DNA, conferring on it an open structure. The RuvB hexamer acts as an ATP-dependent pump, pulling dsDNA into and through the RuvAB complex. HJ branch migration allows RuvC to scan DNA until it finds its consensus sequence, where it cleaves and resolves the cruciform DNA. In Hamiltonella defensa subsp. Acyrthosiphon pisum (strain 5AT), this protein is Holliday junction branch migration complex subunit RuvA.